We begin with the raw amino-acid sequence, 381 residues long: Queuine tRNA-ribosyltransferase (381 aa).

Asp-89 (proton acceptor) is an active-site residue. Substrate contacts are provided by residues 89 to 93 (DSGGF), Asp-143, Gln-187, and Gly-214. An RNA binding region spans residues 245-251 (GVGKPED). The active-site Nucleophile is the Asp-264. The interval 269–273 (TRNAR) is RNA binding; important for wobble base 34 recognition. Cys-302, Cys-304, Cys-307, and His-333 together coordinate Zn(2+).

The protein belongs to the queuine tRNA-ribosyltransferase family. Homodimer. Within each dimer, one monomer is responsible for RNA recognition and catalysis, while the other monomer binds to the replacement base PreQ1. The cofactor is Zn(2+).

It carries out the reaction 7-aminomethyl-7-carbaguanine + guanosine(34) in tRNA = 7-aminomethyl-7-carbaguanosine(34) in tRNA + guanine. Its pathway is tRNA modification; tRNA-queuosine biosynthesis. Its function is as follows. Catalyzes the base-exchange of a guanine (G) residue with the queuine precursor 7-aminomethyl-7-deazaguanine (PreQ1) at position 34 (anticodon wobble position) in tRNAs with GU(N) anticodons (tRNA-Asp, -Asn, -His and -Tyr). Catalysis occurs through a double-displacement mechanism. The nucleophile active site attacks the C1' of nucleotide 34 to detach the guanine base from the RNA, forming a covalent enzyme-RNA intermediate. The proton acceptor active site deprotonates the incoming PreQ1, allowing a nucleophilic attack on the C1' of the ribose to form the product. After dissociation, two additional enzymatic reactions on the tRNA convert PreQ1 to queuine (Q), resulting in the hypermodified nucleoside queuosine (7-(((4,5-cis-dihydroxy-2-cyclopenten-1-yl)amino)methyl)-7-deazaguanosine). The polypeptide is Queuine tRNA-ribosyltransferase (Pectobacterium carotovorum subsp. carotovorum (strain PC1)).